We begin with the raw amino-acid sequence, 387 residues long: Enoyl-[acyl-carrier-protein] reductase 2, mitochondrial (387 aa).

A mitochondrion-targeting transit peptide spans M1–M23. Catalysis depends on Y79, which acts as the Proton donor. Residues N172, N199–V202, R222–R224, Y297–M300, F322–V324, and K382 contribute to the NADP(+) site.

This sequence belongs to the zinc-containing alcohol dehydrogenase family. Quinone oxidoreductase subfamily. As to quaternary structure, homodimer.

It localises to the mitochondrion matrix. It carries out the reaction a 2,3-saturated acyl-[ACP] + NADP(+) = a (2E)-enoyl-[ACP] + NADPH + H(+). Functionally, catalyzes the NADPH-dependent reduction of trans-2-enoyl thioesters in mitochondrial fatty acid synthesis (fatty acid synthesis type II). Fatty acid chain elongation in mitochondria uses acyl carrier protein (ACP) as an acyl group carrier, but the enzyme accepts both ACP and CoA thioesters as substrates in vitro. Required for respiration and the maintenance of the mitochondrial compartment. This is Enoyl-[acyl-carrier-protein] reductase 2, mitochondrial (ETR2) from Debaryomyces hansenii (strain ATCC 36239 / CBS 767 / BCRC 21394 / JCM 1990 / NBRC 0083 / IGC 2968) (Yeast).